A 1004-amino-acid polypeptide reads, in one-letter code: Copper-transporting ATPase (1004 aa).

Over 1–262 (MREVILAVHG…FWKKNSIKST (262 aa)) the chain is Cytoplasmic. HMA domains are found at residues 2 to 67 (REVI…FDCE) and 80 to 146 (KEGL…FDSN). Residues C13, C16, C91, and C94 each contribute to the Cu(+) site. A helical transmembrane segment spans residues 263 to 283 (LLAIICMLLYMIVPMMWPTIV). Topologically, residues 284–303 (QDRIFPYKETSFVRGLFYRD) are lumenal, vesicle. The chain crosses the membrane as a helical span at residues 304–324 (ILGVILASYIQFSVGFYFYKA). Residues 325-335 (AWASLKHGSGT) lie on the Cytoplasmic side of the membrane. The helical transmembrane segment at 336-356 (MDTLVCVSTTCAYTFSVFSLV) threads the bilayer. Over 357-370 (HNMFHPSSTGKLPR) the chain is Lumenal, vesicle. Residues 371-391 (IVFDTSIMIISYISIGKYLET) form a helical membrane-spanning segment. At 392-528 (LAKSQTSTAL…IQGYADYLAS (137 aa)) the chain is on the cytoplasmic side. Residues 529 to 549 (IFVPGILILAVLTFFIWCFIL) form a helical membrane-spanning segment. Over 550–577 (NISANPPVAFTANTKADNFFICLQTATS) the chain is Lumenal, vesicle. A helical membrane pass occupies residues 578–598 (VVIVACPCALGLATPTAIMVG). Residues 599 to 901 (TGVGAQNGVL…LKTFKRIKLN (303 aa)) are Cytoplasmic-facing. Catalysis depends on D627, which acts as the 4-aspartylphosphate intermediate. Residues D838 and D842 each contribute to the Mg(2+) site. The chain crosses the membrane as a helical span at residues 902-924 (LFWALCYNIFMIPIAMGVLIPWG). At 925–927 (ITL) the chain is on the lumenal, vesicle side. Residues 928 to 950 (PPMLAGLAMAFSSVSVVLSSLML) form a helical membrane-spanning segment. The Cytoplasmic segment spans residues 951–1004 (KKWTPPDIESHGISDFKSKFSIGNFWSRLFSTRAIAGEQDIESQAGLMSNEEVL).

The protein belongs to the cation transport ATPase (P-type) (TC 3.A.3) family. Type IB subfamily. As to quaternary structure, interacts with the copper chaperone ATX1 via the copper anion.

Its subcellular location is the golgi apparatus. It is found in the trans-Golgi network membrane. The enzyme catalyses Cu(+)(in) + ATP + H2O = Cu(+)(out) + ADP + phosphate + H(+). Copper-transporting P-type ATPase necessary for the proper uptake of iron. Required for export of copper from cytosol into extracytosolic compartment. Retrieves copper from the metallochaperone ATX1 and incorporates it into trans-Golgi vesicles where they are acquired by the cell-surface iron transporter FET3. Required the production of inositolphosphorylceramide D, probably by delivering copper to a yet to be identified enzyme. In Saccharomyces cerevisiae (strain ATCC 204508 / S288c) (Baker's yeast), this protein is Copper-transporting ATPase.